The sequence spans 588 residues: Proteasome-associated ATPase (588 aa).

The segment covering 1-10 (MAAHDDDMNR) has biased composition (basic and acidic residues). A disordered region spans residues 1–23 (MAAHDDDMNRGIRPGRGSDDPAG). Residues 47-94 (RILEERIVELQTNLAGVSAQNERLANTLREARDQIVALKEEVDRLAQP) adopt a coiled-coil conformation. 276–281 (GCGKTL) provides a ligand contact to ATP. Residues 587 to 588 (YL) are docks into pockets in the proteasome alpha-ring.

This sequence belongs to the AAA ATPase family. Homohexamer. Assembles into a hexameric ring structure that caps the 20S proteasome core. Strongly interacts with the prokaryotic ubiquitin-like protein Pup through a hydrophobic interface; the interacting region of ARC lies in its N-terminal coiled-coil domain. There is one Pup binding site per ARC hexamer ring. Upon ATP-binding, the C-terminus of ARC interacts with the alpha-rings of the proteasome core, possibly by binding to the intersubunit pockets.

Its pathway is protein degradation; proteasomal Pup-dependent pathway. Functionally, ATPase which is responsible for recognizing, binding, unfolding and translocation of pupylated proteins into the bacterial 20S proteasome core particle. May be essential for opening the gate of the 20S proteasome via an interaction with its C-terminus, thereby allowing substrate entry and access to the site of proteolysis. Thus, the C-termini of the proteasomal ATPase may function like a 'key in a lock' to induce gate opening and therefore regulate proteolysis. The protein is Proteasome-associated ATPase of Streptomyces avermitilis (strain ATCC 31267 / DSM 46492 / JCM 5070 / NBRC 14893 / NCIMB 12804 / NRRL 8165 / MA-4680).